The following is a 1085-amino-acid chain: Cell wall protein IFF6 (1085 aa).

The first 19 residues, 1 to 19, serve as a signal peptide directing secretion; that stretch reads MLLKQIFLPFFVLFNAINA. A disordered region spans residues 339 to 1060; it reads PSPGTDESSS…SSNSATIPEQ (722 aa). The span at 342-528 shows a compositional bias: low complexity; it reads GTDESSSLSS…QSSSGTGQSS (187 aa). A compositionally biased stretch (acidic residues) spans 529–538; sequence TEDEPIDSTE. The span at 539–828 shows a compositional bias: low complexity; it reads SDTSSATDSS…TVTNTATNTG (290 aa). Asn659, Asn782, Asn854, Asn860, Asn864, Asn874, Asn882, Asn886, Asn890, Asn896, Asn900, Asn910, Asn924, Asn932, Asn938, Asn952, Asn960, Asn964, Asn968, Asn976, Asn980, Asn992, Asn996, Asn1008, and Asn1016 each carry an N-linked (GlcNAc...) asparagine glycan. Positions 847-1010 are enriched in gly residues; sequence NNGGGSNNGS…GSGSGSGNGS (164 aa). Residues 1018 to 1028 show a composition bias toward gly residues; it reads SGSGSGSGNGQ. Low complexity predominate over residues 1031–1052; that stretch reads GIITSSIGQPGSSTSTQGPSSS. Residue Asn1062 is the site of GPI-anchor amidated asparagine attachment. Positions 1063–1085 are cleaved as a propeptide — removed in mature form; the sequence is SGNHIKFTLFNGLLIGLVPIVFM.

Belongs to the HYR1/IFF family. Post-translationally, the GPI-anchor is attached to the protein in the endoplasmic reticulum and serves to target the protein to the cell surface. There, the glucosamine-inositol phospholipid moiety is cleaved off and the GPI-modified mannoprotein is covalently attached via its lipidless GPI glycan remnant to the 1,6-beta-glucan of the outer cell wall layer.

Its subcellular location is the secreted. It is found in the cell wall. It localises to the membrane. In terms of biological role, GPI-anchored cell wall protein involved in cell wall organization, hyphal growth, as well as in host-fungal interaction and virulence. This Candida albicans (strain SC5314 / ATCC MYA-2876) (Yeast) protein is Cell wall protein IFF6 (IFF6).